The chain runs to 591 residues: MSSTENPDSVAAARELEALRAEASALRRQLAESPEQLREMESRVDSLSIRNTKLMDTLKEARQQLIALREEVDRLGQPPSGYGVLLGVHDDQTVDVFTSGRKMRLTCSPNVDAETLKLGQTVRLNEALTIVEAGNFERVGEISTLREVLDDGQRALVVGHADEERIVWLAEPLATVYEDSERESIAYDAESPTRKLRPGDSLLVDTKAGYAFERIPKAEVEDLVLEEVPDVHYDDIGGLGRQIEQIRDAVELPFLHKDLFHEYELRPPKGVLLYGPPGCGKTLIAKAVANSLAKKIAEARGQDSKEAKSYFLNIKGPELLNKFVGETERHIRLIFQRAREKASEGTPVIVFFDEMDSIFRTRGSGVSSDVETTVVPQLLSEIDGVEGLENVIVIGASNREDMIDPAILRPGRLDVKIKIERPDAESAQDIFSKYLVETLPVHSDDIAEFGGDRTACIRVMIERVVDRMYAESEENRFLEVTYANGDKEVLYFKDFNSGAMIQNIVDRAKKYAIKSVLDTGAPGLRVQHLFDSIVDEFSENEDLPNTTNPDDWARISGKKGERIVYIRTLVTGKNASASRAIDTESNTGQYL.

Residues 8–77 (DSVAAARELE…LREEVDRLGQ (70 aa)) adopt a coiled-coil conformation. 278–283 (GCGKTL) contacts ATP. Residues 590-591 (YL) form a docks into pockets in the proteasome alpha-ring region.

This sequence belongs to the AAA ATPase family. Homohexamer. Assembles into a hexameric ring structure that caps the 20S proteasome core. Strongly interacts with the prokaryotic ubiquitin-like protein Pup through a hydrophobic interface; the interacting region of ARC lies in its N-terminal coiled-coil domain. There is one Pup binding site per ARC hexamer ring. Upon ATP-binding, the C-terminus of ARC interacts with the alpha-rings of the proteasome core, possibly by binding to the intersubunit pockets.

Its pathway is protein degradation; proteasomal Pup-dependent pathway. Its function is as follows. ATPase which is responsible for recognizing, binding, unfolding and translocation of pupylated proteins into the bacterial 20S proteasome core particle. May be essential for opening the gate of the 20S proteasome via an interaction with its C-terminus, thereby allowing substrate entry and access to the site of proteolysis. Thus, the C-termini of the proteasomal ATPase may function like a 'key in a lock' to induce gate opening and therefore regulate proteolysis. This is Proteasome-associated ATPase from Rhodococcus jostii (strain RHA1).